Reading from the N-terminus, the 114-residue chain is UPF0473 protein OEOE_1164 (114 aa).

Belongs to the UPF0473 family.

The protein is UPF0473 protein OEOE_1164 of Oenococcus oeni (strain ATCC BAA-331 / PSU-1).